The chain runs to 368 residues: MSETAKKVIVGMSGGVDSSVSAWLLQQQGYQVEGLFMKNWEEDDGEEYCTAAADLADAQAVCDKLGIELHTVNFAAEYWDNVFELFLAEYKAGRTPNPDILCNKEIKFKAFLEFAAEDLGADYIATGHYVRRADVDGKSRLLRGLDSNKDQSYFLYTLSHEQIAQSLFPVGELEKPQVRKIAEDLGLVTAKKKDSTGICFIGERKFREFLGRYLPAQPGKIITVDGDEIGEHQGLMYHTLGQRKGLGIGGTKEGTEEPWYVVDKDVENNILVVAQGHEHPRLMSVGLIAQQLHWVDREPFTGTMRCTVKTRYRQTDIPCTVKALDDDRIEVIFDEPVAAVTPGQSAVFYNGEVCLGGGIIEQRLPLPV.

Residues 11-18 (GMSGGVDS) and methionine 37 contribute to the ATP site. The tract at residues 97–99 (NPD) is interaction with target base in tRNA. Catalysis depends on cysteine 102, which acts as the Nucleophile. Cysteine 102 and cysteine 199 are oxidised to a cystine. Glycine 127 provides a ligand contact to ATP. The segment at 149–151 (KDQ) is interaction with tRNA. Cysteine 199 acts as the Cysteine persulfide intermediate in catalysis. Residues 311 to 312 (RY) form an interaction with tRNA region.

It belongs to the MnmA/TRMU family. In terms of assembly, interacts with TusE.

Its subcellular location is the cytoplasm. It carries out the reaction S-sulfanyl-L-cysteinyl-[protein] + uridine(34) in tRNA + AH2 + ATP = 2-thiouridine(34) in tRNA + L-cysteinyl-[protein] + A + AMP + diphosphate + H(+). Catalyzes the 2-thiolation of uridine at the wobble position (U34) of tRNA(Lys), tRNA(Glu) and tRNA(Gln), leading to the formation of s(2)U34, the first step of tRNA-mnm(5)s(2)U34 synthesis. Sulfur is provided by IscS, via a sulfur-relay system. Binds ATP and its substrate tRNAs. The polypeptide is tRNA-specific 2-thiouridylase MnmA (Escherichia coli O139:H28 (strain E24377A / ETEC)).